The following is a 567-amino-acid chain: Proline--tRNA ligase (567 aa).

This sequence belongs to the class-II aminoacyl-tRNA synthetase family. ProS type 1 subfamily. In terms of assembly, homodimer.

The protein localises to the cytoplasm. The enzyme catalyses tRNA(Pro) + L-proline + ATP = L-prolyl-tRNA(Pro) + AMP + diphosphate. Functionally, catalyzes the attachment of proline to tRNA(Pro) in a two-step reaction: proline is first activated by ATP to form Pro-AMP and then transferred to the acceptor end of tRNA(Pro). As ProRS can inadvertently accommodate and process non-cognate amino acids such as alanine and cysteine, to avoid such errors it has two additional distinct editing activities against alanine. One activity is designated as 'pretransfer' editing and involves the tRNA(Pro)-independent hydrolysis of activated Ala-AMP. The other activity is designated 'posttransfer' editing and involves deacylation of mischarged Ala-tRNA(Pro). The misacylated Cys-tRNA(Pro) is not edited by ProRS. This Stenotrophomonas maltophilia (strain K279a) protein is Proline--tRNA ligase.